Consider the following 221-residue polypeptide: Phosphoribosylformylglycinamidine synthase subunit PurQ (221 aa).

The region spanning 5–221 (TVGIVVFPGS…LYTLRSLITQ (217 aa)) is the Glutamine amidotransferase type-1 domain. Cys-89 acts as the Nucleophile in catalysis. Residues His-197 and Glu-199 contribute to the active site.

In terms of assembly, part of the FGAM synthase complex composed of 1 PurL, 1 PurQ and 2 PurS subunits.

It is found in the cytoplasm. The enzyme catalyses N(2)-formyl-N(1)-(5-phospho-beta-D-ribosyl)glycinamide + L-glutamine + ATP + H2O = 2-formamido-N(1)-(5-O-phospho-beta-D-ribosyl)acetamidine + L-glutamate + ADP + phosphate + H(+). It catalyses the reaction L-glutamine + H2O = L-glutamate + NH4(+). It functions in the pathway purine metabolism; IMP biosynthesis via de novo pathway; 5-amino-1-(5-phospho-D-ribosyl)imidazole from N(2)-formyl-N(1)-(5-phospho-D-ribosyl)glycinamide: step 1/2. Its function is as follows. Part of the phosphoribosylformylglycinamidine synthase complex involved in the purines biosynthetic pathway. Catalyzes the ATP-dependent conversion of formylglycinamide ribonucleotide (FGAR) and glutamine to yield formylglycinamidine ribonucleotide (FGAM) and glutamate. The FGAM synthase complex is composed of three subunits. PurQ produces an ammonia molecule by converting glutamine to glutamate. PurL transfers the ammonia molecule to FGAR to form FGAM in an ATP-dependent manner. PurS interacts with PurQ and PurL and is thought to assist in the transfer of the ammonia molecule from PurQ to PurL. The chain is Phosphoribosylformylglycinamidine synthase subunit PurQ from Prochlorococcus marinus subsp. pastoris (strain CCMP1986 / NIES-2087 / MED4).